Here is a 123-residue protein sequence, read N- to C-terminus: Large ribosomal subunit protein uL18 (123 aa).

Belongs to the universal ribosomal protein uL18 family. In terms of assembly, part of the 50S ribosomal subunit; part of the 5S rRNA/L5/L18/L25 subcomplex. Contacts the 5S and 23S rRNAs.

Functionally, this is one of the proteins that bind and probably mediate the attachment of the 5S RNA into the large ribosomal subunit, where it forms part of the central protuberance. This is Large ribosomal subunit protein uL18 from Chlamydia muridarum (strain MoPn / Nigg).